Reading from the N-terminus, the 470-residue chain is Sulfate adenylyltransferase subunit 1 (470 aa).

The tr-type G domain maps to 22-237 (KEVLRFITCG…LEEVPVKSEE (216 aa)). The G1 stretch occupies residues 31–38 (GSVDDGKS). A GTP-binding site is contributed by 31–38 (GSVDDGKS). A G2 region spans residues 89–93 (GITID). The G3 stretch occupies residues 110 to 113 (DTPG). Residues 110 to 114 (DTPGH) and 165 to 168 (NKMD) contribute to the GTP site. The segment at 165 to 168 (NKMD) is G4. Positions 202 to 204 (SAK) are G5.

It belongs to the TRAFAC class translation factor GTPase superfamily. Classic translation factor GTPase family. CysN/NodQ subfamily. As to quaternary structure, heterodimer composed of CysD, the smaller subunit, and CysN.

It carries out the reaction sulfate + ATP + H(+) = adenosine 5'-phosphosulfate + diphosphate. It participates in sulfur metabolism; hydrogen sulfide biosynthesis; sulfite from sulfate: step 1/3. Its function is as follows. With CysD forms the ATP sulfurylase (ATPS) that catalyzes the adenylation of sulfate producing adenosine 5'-phosphosulfate (APS) and diphosphate, the first enzymatic step in sulfur assimilation pathway. APS synthesis involves the formation of a high-energy phosphoric-sulfuric acid anhydride bond driven by GTP hydrolysis by CysN coupled to ATP hydrolysis by CysD. The chain is Sulfate adenylyltransferase subunit 1 from Methylorubrum populi (strain ATCC BAA-705 / NCIMB 13946 / BJ001) (Methylobacterium populi).